Consider the following 224-residue polypeptide: LexA repressor (224 aa).

Residues 31 to 51 (RAEIATELGFRSANAAEEHLQ) constitute a DNA-binding region (H-T-H motif). Residues serine 142 and lysine 179 each act as for autocatalytic cleavage activity in the active site.

It belongs to the peptidase S24 family. As to quaternary structure, homodimer.

It carries out the reaction Hydrolysis of Ala-|-Gly bond in repressor LexA.. Functionally, represses a number of genes involved in the response to DNA damage (SOS response), including recA and lexA. In the presence of single-stranded DNA, RecA interacts with LexA causing an autocatalytic cleavage which disrupts the DNA-binding part of LexA, leading to derepression of the SOS regulon and eventually DNA repair. The polypeptide is LexA repressor (Albidiferax ferrireducens (strain ATCC BAA-621 / DSM 15236 / T118) (Rhodoferax ferrireducens)).